Reading from the N-terminus, the 426-residue chain is Serine--tRNA ligase (426 aa).

An L-serine-binding site is contributed by 231-233 (TLE). 262-264 (RSE) provides a ligand contact to ATP. E285 is an L-serine binding site. An ATP-binding site is contributed by 349 to 352 (EISS). S385 provides a ligand contact to L-serine.

Belongs to the class-II aminoacyl-tRNA synthetase family. Type-1 seryl-tRNA synthetase subfamily. Homodimer. The tRNA molecule binds across the dimer.

It localises to the cytoplasm. The enzyme catalyses tRNA(Ser) + L-serine + ATP = L-seryl-tRNA(Ser) + AMP + diphosphate + H(+). It catalyses the reaction tRNA(Sec) + L-serine + ATP = L-seryl-tRNA(Sec) + AMP + diphosphate + H(+). Its pathway is aminoacyl-tRNA biosynthesis; selenocysteinyl-tRNA(Sec) biosynthesis; L-seryl-tRNA(Sec) from L-serine and tRNA(Sec): step 1/1. Catalyzes the attachment of serine to tRNA(Ser). Is also able to aminoacylate tRNA(Sec) with serine, to form the misacylated tRNA L-seryl-tRNA(Sec), which will be further converted into selenocysteinyl-tRNA(Sec). The protein is Serine--tRNA ligase of Malacoplasma penetrans (strain HF-2) (Mycoplasma penetrans).